The sequence spans 372 residues: GPN-loop GTPase 1 (372 aa).

Ala-2 is modified (N-acetylalanine). GTP is bound at residue 29–34; sequence GSGKTT. A Gly-Pro-Asn (GPN)-loop; involved in dimer interface motif is present at residues 86–88; sequence GPN. 189–192 is a binding site for GTP; that stretch reads NKTD. Ser-301 and Ser-314 each carry phosphoserine. A disordered region spans residues 303–372; that stretch reads ALDPEAGKGN…ESMAHWKRNK (70 aa). At Thr-328 the chain carries Phosphothreonine. Residues 330–342 show a composition bias toward acidic residues; the sequence is DEEDEEADSDTDD. Ser-338 is modified (phosphoserine). At Thr-340 the chain carries Phosphothreonine. Basic and acidic residues predominate over residues 343-355; it reads IDHRVTEESREEP.

It belongs to the GPN-loop GTPase family. As to quaternary structure, heterodimer with GPN3. Binds to RNA polymerase II (RNAPII). Interacts directly with RNAPII subunits RPB4 and RPB7 and the CTD of RPB1. Interacts with XPA.

The protein localises to the cytoplasm. The protein resides in the nucleus. Functionally, small GTPase required for proper nuclear import of RNA polymerase II (RNAPII). May act at an RNAP assembly step prior to nuclear import. Forms an interface between the RNA polymerase II enzyme and chaperone/scaffolding proteins, suggesting that it is required to connect RNA polymerase II to regulators of protein complex formation. May be involved in nuclear localization of XPA. The chain is GPN-loop GTPase 1 from Mus musculus (Mouse).